We begin with the raw amino-acid sequence, 235 residues long: Ubiquinone biosynthesis O-methyltransferase (235 aa).

4 residues coordinate S-adenosyl-L-methionine: arginine 39, glycine 59, aspartate 80, and methionine 124.

It belongs to the methyltransferase superfamily. UbiG/COQ3 family.

The enzyme catalyses a 3-demethylubiquinol + S-adenosyl-L-methionine = a ubiquinol + S-adenosyl-L-homocysteine + H(+). The catalysed reaction is a 3-(all-trans-polyprenyl)benzene-1,2-diol + S-adenosyl-L-methionine = a 2-methoxy-6-(all-trans-polyprenyl)phenol + S-adenosyl-L-homocysteine + H(+). Its pathway is cofactor biosynthesis; ubiquinone biosynthesis. O-methyltransferase that catalyzes the 2 O-methylation steps in the ubiquinone biosynthetic pathway. This Photobacterium profundum (strain SS9) protein is Ubiquinone biosynthesis O-methyltransferase.